Reading from the N-terminus, the 564-residue chain is MDEKQLVSQALSAAIDGVLGVEQIAAIIEKPKSSDLGDLAFPAFQLAKTLRKSPQIIAGEIAEKIDTKGFEKVIAVGPYVNFFLDKNATASEVIREVLTEGEHYGDANIGEGGNVPIDMSAPNIAKPFSIGHLRSTVIGDSIAKIYEKLGYQPIKINHLGDWGKQFGLLITAYKKYGDEATITANPIDELLKLYVKINAEAKEDPEVDEEGRQWFLKMEQGDEEALRIWKWFSDVSLIEFNRIYGKLGVTFDHFMGESFYSDKMDAIVEDLENKNLLHESKGALIVDLEKYNLNPALIKKTDGATLYITRDLATAAYRKKTFNFVKSLYVVGGEQTNHFKQLKAVLKEAGYDWSDDMVHVPFGMVTQGGKKFSTRKGHVVKLEMALDEAVDRAEKQIEAKNPNLENKEEVAKQVGVGAVKFYDLKTDRNNGYDFDLDEMVSFEGETGPYVQYAHARIQSILRKANRKVNIDNISLVVSDAEAWEIVKALKEFPNIVKRAADNYEPSIIAKYAISLAQAFNKYYAHVRILEDDAQLDGRLALISATSIVLKEALRLLGVAAPENM.

The short motif at 122–132 is the 'HIGH' region element; the sequence is PNIAKPFSIGH.

Belongs to the class-I aminoacyl-tRNA synthetase family. As to quaternary structure, monomer.

The protein resides in the cytoplasm. It catalyses the reaction tRNA(Arg) + L-arginine + ATP = L-arginyl-tRNA(Arg) + AMP + diphosphate. This chain is Arginine--tRNA ligase, found in Lactococcus lactis subsp. cremoris (strain SK11).